A 409-amino-acid chain; its full sequence is MPKVLHVADVHLGARPYGLEERRDDIFRSFEFVVETALKDRPDAVLIAGDLFDKPKLPLRDVKQAVELVRALTDAGIPVLAAHGEHDTPSVRDETLLSLMEASLDGFKAPLYRSGMRPGDFVVDLGSLKVAVVPFFKVPLEERRRLTLRFLREFDQISRTSSGTLVLLAHMSLDAEMQFDAVASPSDLPSGAKYAALGHLHAPRIRLDAPTPYAYPGVLDPLKVEEINTPGSPLYVDLSGDAPIIEKVKVPRRPQYRIEVDIGDGGSIYNAVNRGLRRVLANVRASREDWLKPLIHVIIKSDKPISKARVIAEARKAAGGADVLLKIHWKIVAGGEHAGTSPGLQGEGPLDLAKIAAEYYKIPLNAASTILHDLAEAAAEKDELRVREILETLATTVSQDTWKRILYMR.

Positions 9, 11, 50, and 85 each coordinate Mn(2+). His-86 acts as the Proton donor in catalysis. The Mn(2+) site is built by His-170, His-199, and His-201.

Belongs to the MRE11/RAD32 family. As to quaternary structure, homodimer. Forms a heterotetramer composed of two Mre11 subunits and two Rad50 subunits. Mn(2+) is required as a cofactor.

Its activity is regulated as follows. Nuclease activity is regulated by Rad50. Functionally, part of the Rad50/Mre11 complex, which is involved in the early steps of DNA double-strand break (DSB) repair. The complex may facilitate opening of the processed DNA ends to aid in the recruitment of HerA and NurA. Mre11 binds to DSB ends and has both double-stranded 3'-5' exonuclease activity and single-stranded endonuclease activity. This is DNA double-strand break repair protein Mre11 from Aeropyrum pernix (strain ATCC 700893 / DSM 11879 / JCM 9820 / NBRC 100138 / K1).